The chain runs to 335 residues: UPF0104 membrane protein PH1989 (335 aa).

8 helical membrane passes run 4 to 24 (YLLI…AGIE), 34 to 54 (DIRF…IWAV), 62 to 82 (GANI…GIFL), 122 to 142 (ILDV…ALTI), 148 to 168 (LIIL…TTVF), 231 to 251 (LYSF…FLSL), 266 to 286 (ASIA…TEVV), and 304 to 324 (VTML…GILV).

Belongs to the UPF0104 family.

The protein resides in the cell membrane. The polypeptide is UPF0104 membrane protein PH1989 (Pyrococcus horikoshii (strain ATCC 700860 / DSM 12428 / JCM 9974 / NBRC 100139 / OT-3)).